We begin with the raw amino-acid sequence, 600 residues long: Zinc metalloproteinase-disintegrin-like stejnihagin-B (600 aa).

Residues 1–20 form the signal peptide; it reads MIEVLLVTICLAVFPYQGSS. Positions 21 to 191 are excised as a propeptide; it reads IILESGNVND…KASQLVVTAE (171 aa). Gln-192 carries the post-translational modification Pyrrolidone carboxylic acid. In terms of domain architecture, Peptidase M12B spans 198-389; the sequence is RYVKLAIVAD…YNPQCILNAL (192 aa). Asn-261 and Asn-317 each carry an N-linked (GlcNAc...) asparagine glycan. 3 disulfides stabilise this stretch: Cys-306/Cys-384, Cys-346/Cys-368, and Cys-348/Cys-351. His-331 lines the Zn(2+) pocket. Residue Glu-332 is part of the active site. Residues His-335 and His-341 each coordinate Zn(2+). Positions 397–483 constitute a Disintegrin domain; sequence PPVCGNELLE…DCPTDSFHRN (87 aa). Residues Val-399, Asn-402, Leu-404, Glu-406, Glu-409, and Asp-412 each coordinate Ca(2+). 14 disulfides stabilise this stretch: Cys-400/Cys-429, Cys-411/Cys-424, Cys-413/Cys-419, Cys-423/Cys-446, Cys-437/Cys-443, Cys-442/Cys-468, Cys-455/Cys-475, Cys-462/Cys-494, Cys-487/Cys-499, Cys-506/Cys-556, Cys-521/Cys-565, Cys-534/Cys-544, Cys-551/Cys-587, and Cys-581/Cys-593. The N-linked (GlcNAc...) asparagine glycan is linked to Asn-425. The D/ECD-tripeptide signature appears at 461 to 463; sequence ECD. N-linked (GlcNAc...) asparagine glycosylation is present at Asn-467. Asn-513 carries an N-linked (GlcNAc...) asparagine glycan.

The protein belongs to the venom metalloproteinase (M12B) family. P-III subfamily. P-IIIa sub-subfamily. Monomer. Zn(2+) is required as a cofactor. Expressed by the venom gland.

It localises to the secreted. This metalloproteinase-disintegrin-like impairs hemostasis in the envenomed animal. This is Zinc metalloproteinase-disintegrin-like stejnihagin-B from Trimeresurus stejnegeri (Chinese green tree viper).